Reading from the N-terminus, the 113-residue chain is Ribonuclease P protein component (113 aa).

This sequence belongs to the RnpA family. Consists of a catalytic RNA component (M1 or rnpB) and a protein subunit.

It catalyses the reaction Endonucleolytic cleavage of RNA, removing 5'-extranucleotides from tRNA precursor.. Its function is as follows. RNaseP catalyzes the removal of the 5'-leader sequence from pre-tRNA to produce the mature 5'-terminus. It can also cleave other RNA substrates such as 4.5S RNA. The protein component plays an auxiliary but essential role in vivo by binding to the 5'-leader sequence and broadening the substrate specificity of the ribozyme. This chain is Ribonuclease P protein component, found in Finegoldia magna (strain ATCC 29328 / DSM 20472 / WAL 2508) (Peptostreptococcus magnus).